The chain runs to 309 residues: MSVSGKIGEVDRWIEQLSRCEPLSEEDVIQMCDLAKEVLSVESNVQSVRCPVTVCGDIHGQFHDLMELFNIGGPSPDTNYLFMGDYVDRGYHSVETVSLLIAFKIRYPQRITILRGNHESRQITQVYGFYDECLRKYGNANVWQYFTDLFDYLPLTALIEDRIFCLHGGLSPSIDTLDHVRILDRVQEVPHEGPICDLLWSDPDDRPGWGISPRGAGYTFGPDIAEAFNHNNGLDLIARAHQLVMEGYNWTTNHNVVTIFSAPNYCYRCGNQAAIMGIDDHINYAFIQYDTAPRKEELHVTRRTPDYFL.

The Mn(2+) site is built by aspartate 57, histidine 59, aspartate 85, and asparagine 117. Histidine 118 functions as the Proton donor in the catalytic mechanism. 2 residues coordinate Mn(2+): histidine 167 and histidine 241. Position 309 is a leucine methyl ester (leucine 309).

The protein belongs to the PPP phosphatase family. PP-2A subfamily. Mn(2+) is required as a cofactor.

The enzyme catalyses O-phospho-L-seryl-[protein] + H2O = L-seryl-[protein] + phosphate. It carries out the reaction O-phospho-L-threonyl-[protein] + H2O = L-threonyl-[protein] + phosphate. Essential role in cell cycle control. PP2A may be involved in controlling the entry into mitosis, possibly acting as an inhibitor. The sequence is that of Minor serine/threonine-protein phosphatase PP2A-1 catalytic subunit (ppa1) from Schizosaccharomyces pombe (strain 972 / ATCC 24843) (Fission yeast).